The chain runs to 114 residues: U17-barytoxin-Tl1a (114 aa).

An N-terminal signal peptide occupies residues 1–20; the sequence is MKTIIVFLSLLVLATKFGDA. A propeptide spanning residues 21–74 is cleaved from the precursor; sequence NEGVNQEQMKEVIQNEFREDFLNEMAAMSLLQQLEAIESTLLEKEADRNSRQKR. Disulfide bonds link Cys-75–Cys-88, Cys-82–Cys-93, and Cys-87–Cys-108.

It belongs to the neurotoxin 14 (magi-1) family. 03 (ICK-30-40) subfamily. Expressed by the venom gland.

The protein resides in the secreted. Its function is as follows. Ion channel inhibitor. This chain is U17-barytoxin-Tl1a, found in Trittame loki (Brush-footed trapdoor spider).